The following is a 503-amino-acid chain: Probable cytosol aminopeptidase (503 aa).

Mn(2+)-binding residues include Lys-271 and Asp-276. Lys-283 is an active-site residue. Residues Asp-294, Asp-353, and Glu-355 each contribute to the Mn(2+) site. Residue Arg-357 is part of the active site.

It belongs to the peptidase M17 family. Requires Mn(2+) as cofactor.

The protein resides in the cytoplasm. It catalyses the reaction Release of an N-terminal amino acid, Xaa-|-Yaa-, in which Xaa is preferably Leu, but may be other amino acids including Pro although not Arg or Lys, and Yaa may be Pro. Amino acid amides and methyl esters are also readily hydrolyzed, but rates on arylamides are exceedingly low.. The catalysed reaction is Release of an N-terminal amino acid, preferentially leucine, but not glutamic or aspartic acids.. Functionally, presumably involved in the processing and regular turnover of intracellular proteins. Catalyzes the removal of unsubstituted N-terminal amino acids from various peptides. This is Probable cytosol aminopeptidase from Chlorobium phaeobacteroides (strain DSM 266 / SMG 266 / 2430).